Reading from the N-terminus, the 70-residue chain is UPF0352 protein Sden_2336 (70 aa).

This sequence belongs to the UPF0352 family.

This is UPF0352 protein Sden_2336 from Shewanella denitrificans (strain OS217 / ATCC BAA-1090 / DSM 15013).